Reading from the N-terminus, the 336-residue chain is Holliday junction branch migration complex subunit RuvB (336 aa).

The segment at alanine 4 to tyrosine 184 is large ATPase domain (RuvB-L). Residues isoleucine 23, arginine 24, glycine 65, lysine 68, threonine 69, threonine 70, glutamate 131–tyrosine 133, arginine 174, tyrosine 184, and arginine 221 each bind ATP. Threonine 69 lines the Mg(2+) pocket. The interval glutamine 185 to asparagine 255 is small ATPAse domain (RuvB-S). The interval alanine 258 to proline 336 is head domain (RuvB-H). DNA is bound by residues arginine 294, arginine 313, and arginine 318.

It belongs to the RuvB family. In terms of assembly, homohexamer. Forms an RuvA(8)-RuvB(12)-Holliday junction (HJ) complex. HJ DNA is sandwiched between 2 RuvA tetramers; dsDNA enters through RuvA and exits via RuvB. An RuvB hexamer assembles on each DNA strand where it exits the tetramer. Each RuvB hexamer is contacted by two RuvA subunits (via domain III) on 2 adjacent RuvB subunits; this complex drives branch migration. In the full resolvosome a probable DNA-RuvA(4)-RuvB(12)-RuvC(2) complex forms which resolves the HJ.

The protein localises to the cytoplasm. The enzyme catalyses ATP + H2O = ADP + phosphate + H(+). The RuvA-RuvB-RuvC complex processes Holliday junction (HJ) DNA during genetic recombination and DNA repair, while the RuvA-RuvB complex plays an important role in the rescue of blocked DNA replication forks via replication fork reversal (RFR). RuvA specifically binds to HJ cruciform DNA, conferring on it an open structure. The RuvB hexamer acts as an ATP-dependent pump, pulling dsDNA into and through the RuvAB complex. RuvB forms 2 homohexamers on either side of HJ DNA bound by 1 or 2 RuvA tetramers; 4 subunits per hexamer contact DNA at a time. Coordinated motions by a converter formed by DNA-disengaged RuvB subunits stimulates ATP hydrolysis and nucleotide exchange. Immobilization of the converter enables RuvB to convert the ATP-contained energy into a lever motion, pulling 2 nucleotides of DNA out of the RuvA tetramer per ATP hydrolyzed, thus driving DNA branch migration. The RuvB motors rotate together with the DNA substrate, which together with the progressing nucleotide cycle form the mechanistic basis for DNA recombination by continuous HJ branch migration. Branch migration allows RuvC to scan DNA until it finds its consensus sequence, where it cleaves and resolves cruciform DNA. This chain is Holliday junction branch migration complex subunit RuvB, found in Shigella boydii serotype 18 (strain CDC 3083-94 / BS512).